The chain runs to 268 residues: Protein CDV3 homolog (268 aa).

A compositionally biased stretch (basic and acidic residues) spans 40–50 (KREVVKPKKPE). Disordered regions lie at residues 40-145 (KREV…ERVG) and 184-268 (QQAG…DEAS). A compositionally biased stretch (low complexity) spans 51–61 (AAAGGVAVVGE). Positions 76 to 85 (VEEEWKEFEE) are enriched in acidic residues. The span at 98–107 (QLSTITAQES) shows a compositional bias: polar residues. The span at 123-132 (NYDEDDEDSN) shows a compositional bias: acidic residues. Residues 221 to 239 (RPEEQRKKKNEPAFEEVRH) show a composition bias toward basic and acidic residues.

This sequence belongs to the CDV3 family.

This Drosophila yakuba (Fruit fly) protein is Protein CDV3 homolog.